The chain runs to 876 residues: Phosphoenolpyruvate carboxylase (876 aa).

Catalysis depends on residues histidine 138 and lysine 543.

This sequence belongs to the PEPCase type 1 family. Requires Mg(2+) as cofactor.

The enzyme catalyses oxaloacetate + phosphate = phosphoenolpyruvate + hydrogencarbonate. In terms of biological role, forms oxaloacetate, a four-carbon dicarboxylic acid source for the tricarboxylic acid cycle. The chain is Phosphoenolpyruvate carboxylase from Vibrio atlanticus (strain LGP32) (Vibrio splendidus (strain Mel32)).